Reading from the N-terminus, the 174-residue chain is Ribosome maturation factor RimM (174 aa).

The 74-residue stretch at 98–171 folds into the PRC barrel domain; it reads EDEYYFHEII…TIKIHIMEGL (74 aa).

The protein belongs to the RimM family. Binds ribosomal protein uS19.

The protein resides in the cytoplasm. Its function is as follows. An accessory protein needed during the final step in the assembly of 30S ribosomal subunit, possibly for assembly of the head region. Essential for efficient processing of 16S rRNA. May be needed both before and after RbfA during the maturation of 16S rRNA. It has affinity for free ribosomal 30S subunits but not for 70S ribosomes. The chain is Ribosome maturation factor RimM from Bacillus licheniformis (strain ATCC 14580 / DSM 13 / JCM 2505 / CCUG 7422 / NBRC 12200 / NCIMB 9375 / NCTC 10341 / NRRL NRS-1264 / Gibson 46).